The primary structure comprises 222 residues: Isoprenyl transferase (222 aa).

D12 is a catalytic residue. Residue D12 coordinates Mg(2+). Residues 13–16 (GNRR), W17, and 57–59 (STE) contribute to the substrate site. The Proton acceptor role is filled by N60. Substrate contacts are provided by residues W61, R63, R171, and 177–179 (RLS). Position 190 (E190) interacts with Mg(2+).

This sequence belongs to the UPP synthase family. As to quaternary structure, homodimer. Mg(2+) serves as cofactor.

Its function is as follows. Catalyzes the condensation of isopentenyl diphosphate (IPP) with allylic pyrophosphates generating different type of terpenoids. The protein is Isoprenyl transferase (uppS) of Campylobacter jejuni subsp. jejuni serotype O:2 (strain ATCC 700819 / NCTC 11168).